The following is a 199-amino-acid chain: Chorismate pyruvate-lyase (199 aa).

Belongs to the chorismate pyruvate-lyase type 2 family.

It carries out the reaction chorismate = 4-hydroxybenzoate + pyruvate. Its function is as follows. Removes the pyruvyl group from chorismate to provide 4-hydroxybenzoate (4HB). Involved in the synthesis of glycosylated p-hydroxybenzoic acid methyl esters (p-HBADs) and phenolic glycolipids (PGL) that play important roles in the pathogenesis of mycobacterial infections. The chain is Chorismate pyruvate-lyase from Mycobacterium bovis (strain ATCC BAA-935 / AF2122/97).